The primary structure comprises 560 residues: Chaperonin GroEL 2 (560 aa).

ATP-binding positions include 29–32 (TLGP), 86–90 (DGTTT), Gly-413, 478–480 (NAA), and Asp-494.

The protein belongs to the chaperonin (HSP60) family. Forms a cylinder of 14 subunits composed of two heptameric rings stacked back-to-back. Interacts with the co-chaperonin GroES.

The protein resides in the cytoplasm. The enzyme catalyses ATP + H2O + a folded polypeptide = ADP + phosphate + an unfolded polypeptide.. Together with its co-chaperonin GroES, plays an essential role in assisting protein folding. The GroEL-GroES system forms a nano-cage that allows encapsulation of the non-native substrate proteins and provides a physical environment optimized to promote and accelerate protein folding. This chain is Chaperonin GroEL 2, found in Trichormus variabilis (strain ATCC 29413 / PCC 7937) (Anabaena variabilis).